We begin with the raw amino-acid sequence, 234 residues long: Adenosine 5'-phosphosulfate reductase (234 aa).

Residues Cys-120, Cys-121, Cys-203, and Cys-206 each contribute to the [4Fe-4S] cluster site. Residue Cys-229 is the Nucleophile; cysteine thiosulfonate intermediate of the active site.

It belongs to the PAPS reductase family. CysH subfamily. The cofactor is [4Fe-4S] cluster.

It localises to the cytoplasm. It catalyses the reaction [thioredoxin]-disulfide + sulfite + AMP + 2 H(+) = adenosine 5'-phosphosulfate + [thioredoxin]-dithiol. It functions in the pathway sulfur metabolism; hydrogen sulfide biosynthesis; sulfite from sulfate. Catalyzes the formation of sulfite from adenosine 5'-phosphosulfate (APS) using thioredoxin as an electron donor. The polypeptide is Adenosine 5'-phosphosulfate reductase (Bacillus cereus (strain ZK / E33L)).